The chain runs to 307 residues: Ribosomal RNA small subunit methyltransferase H (307 aa).

S-adenosyl-L-methionine-binding positions include 31-33 (GGH), D51, Y83, D97, and Q104.

It belongs to the methyltransferase superfamily. RsmH family.

It localises to the cytoplasm. It catalyses the reaction cytidine(1402) in 16S rRNA + S-adenosyl-L-methionine = N(4)-methylcytidine(1402) in 16S rRNA + S-adenosyl-L-homocysteine + H(+). Functionally, specifically methylates the N4 position of cytidine in position 1402 (C1402) of 16S rRNA. The sequence is that of Ribosomal RNA small subunit methyltransferase H from Buchnera aphidicola subsp. Cinara cedri (strain Cc).